Here is a 68-residue protein sequence, read N- to C-terminus: Small integral membrane protein 10-like protein 3 (68 aa).

This Homo sapiens (Human) protein is Small integral membrane protein 10-like protein 3.